Here is a 110-residue protein sequence, read N- to C-terminus: Large ribosomal subunit protein uL22 (110 aa).

The protein belongs to the universal ribosomal protein uL22 family. As to quaternary structure, part of the 50S ribosomal subunit.

In terms of biological role, this protein binds specifically to 23S rRNA; its binding is stimulated by other ribosomal proteins, e.g. L4, L17, and L20. It is important during the early stages of 50S assembly. It makes multiple contacts with different domains of the 23S rRNA in the assembled 50S subunit and ribosome. Functionally, the globular domain of the protein is located near the polypeptide exit tunnel on the outside of the subunit, while an extended beta-hairpin is found that lines the wall of the exit tunnel in the center of the 70S ribosome. The polypeptide is Large ribosomal subunit protein uL22 (Vibrio campbellii (strain ATCC BAA-1116)).